The chain runs to 263 residues: Indolethylamine N-methyltransferase (263 aa).

Position 13 is an N6-succinyllysine (K13). S-adenosyl-L-methionine is bound by residues Y20, Y25, 63 to 64, Y69, D85, and N90; that span reads GS. K96 carries the N6-succinyllysine modification. Residues 142 to 143 and L163 contribute to the S-adenosyl-L-methionine site; that span reads DV.

Belongs to the class I-like SAM-binding methyltransferase superfamily. NNMT/PNMT/TEMT family. Monomer.

It localises to the cytoplasm. It carries out the reaction a tertiary amine + S-adenosyl-L-methionine = a methylated tertiary amine + S-adenosyl-L-homocysteine + H(+). The catalysed reaction is a secondary amine + S-adenosyl-L-methionine = a methylated secondary amine + S-adenosyl-L-homocysteine + H(+). It catalyses the reaction a primary amine + S-adenosyl-L-methionine = a methylated primary amine + S-adenosyl-L-homocysteine + H(+). The enzyme catalyses dimethyl sulfide + S-adenosyl-L-methionine = trimethylsulfonium + S-adenosyl-L-homocysteine. Catalyzes the N-methylation of tryptamine and structurally related compounds. Functions as a thioether S-methyltransferase and is active with a variety of thioethers and the corresponding selenium and tellurium compounds, including 3-methylthiopropionaldehyde, dimethyl selenide, dimethyl telluride, 2-methylthioethylamine, 2-methylthioethanol, methyl-n-propyl sulfide and diethyl sulfide. Plays an important role in the detoxification of selenium compounds. This is Indolethylamine N-methyltransferase (INMT) from Pongo abelii (Sumatran orangutan).